The chain runs to 141 residues: Hemoglobin subunit alpha-D (141 aa).

In terms of domain architecture, Globin spans M1–R141. 2 residues coordinate heme b: H58 and H87.

It belongs to the globin family. As to quaternary structure, heterotetramer of two alpha-D chains and two beta chains. Red blood cells.

Involved in oxygen transport from the lung to the various peripheral tissues. The protein is Hemoglobin subunit alpha-D (HBAD) of Rhea americana (Greater rhea).